We begin with the raw amino-acid sequence, 209 residues long: Dual specificity protein phosphatase 22 (209 aa).

A Tyrosine-protein phosphatase domain is found at 4 to 144 (GMNKILPSLF…LEDFGKHDVY (141 aa)). Cys-88 functions as the Phosphocysteine intermediate in the catalytic mechanism. Positions 170 to 193 (DKHKQQEAAESQSATSSGRQWSSH) are disordered. Residues 177–193 (AAESQSATSSGRQWSSH) are compositionally biased toward low complexity.

Belongs to the protein-tyrosine phosphatase family. Non-receptor class dual specificity subfamily.

It is found in the cytoplasm. Its subcellular location is the nucleus. The catalysed reaction is O-phospho-L-tyrosyl-[protein] + H2O = L-tyrosyl-[protein] + phosphate. It catalyses the reaction O-phospho-L-seryl-[protein] + H2O = L-seryl-[protein] + phosphate. It carries out the reaction O-phospho-L-threonyl-[protein] + H2O = L-threonyl-[protein] + phosphate. Its function is as follows. Activates the Jnk signaling pathway. Dephosphorylates and deactivates p38 and stress-activated protein kinase/c-Jun N-terminal kinase (SAPK/JNK). The chain is Dual specificity protein phosphatase 22 (dusp22) from Xenopus tropicalis (Western clawed frog).